A 224-amino-acid polypeptide reads, in one-letter code: 7-cyano-7-deazaguanine synthase (224 aa).

10-20 is an ATP binding site; that stretch reads LSGGLDSATVV. Zn(2+) is bound by residues C189, C199, C202, and C205.

Belongs to the QueC family. Requires Zn(2+) as cofactor.

It carries out the reaction 7-carboxy-7-deazaguanine + NH4(+) + ATP = 7-cyano-7-deazaguanine + ADP + phosphate + H2O + H(+). Its pathway is purine metabolism; 7-cyano-7-deazaguanine biosynthesis. Catalyzes the ATP-dependent conversion of 7-carboxy-7-deazaguanine (CDG) to 7-cyano-7-deazaguanine (preQ(0)). This is 7-cyano-7-deazaguanine synthase from Pseudomonas paraeruginosa (strain DSM 24068 / PA7) (Pseudomonas aeruginosa (strain PA7)).